Consider the following 343-residue polypeptide: 3-dehydroquinate synthase (343 aa).

Residues 86-90 (GALLD), 110-111 (TT), lysine 123, and lysine 132 each bind NAD(+). 3 residues coordinate Zn(2+): glutamate 165, histidine 229, and histidine 243.

This sequence belongs to the sugar phosphate cyclases superfamily. Dehydroquinate synthase family. Requires Co(2+) as cofactor. The cofactor is Zn(2+). NAD(+) is required as a cofactor.

The protein localises to the cytoplasm. The enzyme catalyses 7-phospho-2-dehydro-3-deoxy-D-arabino-heptonate = 3-dehydroquinate + phosphate. Its pathway is metabolic intermediate biosynthesis; chorismate biosynthesis; chorismate from D-erythrose 4-phosphate and phosphoenolpyruvate: step 2/7. Catalyzes the conversion of 3-deoxy-D-arabino-heptulosonate 7-phosphate (DAHP) to dehydroquinate (DHQ). The chain is 3-dehydroquinate synthase from Pyrobaculum islandicum (strain DSM 4184 / JCM 9189 / GEO3).